The primary structure comprises 111 residues: Iron-sulfur cluster insertion protein ErpA (111 aa).

Residues cysteine 39, cysteine 103, and cysteine 105 each coordinate iron-sulfur cluster.

This sequence belongs to the HesB/IscA family. Homodimer. Requires iron-sulfur cluster as cofactor.

In terms of biological role, required for insertion of 4Fe-4S clusters for at least IspG. The sequence is that of Iron-sulfur cluster insertion protein ErpA from Acinetobacter baumannii (strain SDF).